The sequence spans 118 residues: Histone H4 (118 aa).

Residues 1 to 39 (MATDTGSGRGKGGKGVTLGKGSKGAKASKGGKRIRTKTQ) form a disordered region. Residues 7–22 (SGRGKGGKGVTLGKGS) show a composition bias toward gly residues.

It belongs to the histone H4 family. The nucleosome is a histone octamer containing two molecules each of H2A, H2B, H3 and H4 assembled in one H3-H4 heterotetramer and two H2A-H2B heterodimers. The octamer wraps approximately 147 bp of DNA.

The protein resides in the nucleus. It is found in the chromosome. Its function is as follows. Core component of nucleosome. Nucleosomes wrap and compact DNA into chromatin, limiting DNA accessibility to the cellular machineries which require DNA as a template. Histones thereby play a central role in transcription regulation, DNA repair, DNA replication and chromosomal stability. DNA accessibility is regulated via a complex set of post-translational modifications of histones, also called histone code, and nucleosome remodeling. This Entamoeba histolytica (strain ATCC 30459 / HM-1:IMSS / ABRM) protein is Histone H4.